Reading from the N-terminus, the 374-residue chain is Chorismate synthase (374 aa).

NADP(+) is bound at residue arginine 55. FMN contacts are provided by residues 132–134 (RGS), glycine 293, 308–312 (KPTPS), and arginine 335.

It belongs to the chorismate synthase family. It depends on FMNH2 as a cofactor.

The catalysed reaction is 5-O-(1-carboxyvinyl)-3-phosphoshikimate = chorismate + phosphate. The protein operates within metabolic intermediate biosynthesis; chorismate biosynthesis; chorismate from D-erythrose 4-phosphate and phosphoenolpyruvate: step 7/7. Functionally, catalyzes the anti-1,4-elimination of the C-3 phosphate and the C-6 proR hydrogen from 5-enolpyruvylshikimate-3-phosphate (EPSP) to yield chorismate, which is the branch point compound that serves as the starting substrate for the three terminal pathways of aromatic amino acid biosynthesis. This reaction introduces a second double bond into the aromatic ring system. The protein is Chorismate synthase of Methanothermobacter thermautotrophicus (strain ATCC 29096 / DSM 1053 / JCM 10044 / NBRC 100330 / Delta H) (Methanobacterium thermoautotrophicum).